The primary structure comprises 248 residues: Probable transcriptional regulatory protein Ecaj_0351 (248 aa).

Positions 1 to 21 (MAGHSQFANIKHRKGAQDAKR) are disordered.

This sequence belongs to the TACO1 family.

It is found in the cytoplasm. This Ehrlichia canis (strain Jake) protein is Probable transcriptional regulatory protein Ecaj_0351.